The chain runs to 276 residues: Shikimate dehydrogenase (NADP(+)) (276 aa).

Shikimate contacts are provided by residues serine 15–serine 17 and threonine 63. The active-site Proton acceptor is lysine 67. Aspartate 79 serves as a coordination point for NADP(+). Asparagine 88 and aspartate 103 together coordinate shikimate. NADP(+) contacts are provided by residues glycine 130–alanine 134, asparagine 154–arginine 159, and isoleucine 217. Residue tyrosine 219 coordinates shikimate. Glycine 240 lines the NADP(+) pocket.

Belongs to the shikimate dehydrogenase family. Homodimer.

It catalyses the reaction shikimate + NADP(+) = 3-dehydroshikimate + NADPH + H(+). The protein operates within metabolic intermediate biosynthesis; chorismate biosynthesis; chorismate from D-erythrose 4-phosphate and phosphoenolpyruvate: step 4/7. Its function is as follows. Involved in the biosynthesis of the chorismate, which leads to the biosynthesis of aromatic amino acids. Catalyzes the reversible NADPH linked reduction of 3-dehydroshikimate (DHSA) to yield shikimate (SA). The polypeptide is Shikimate dehydrogenase (NADP(+)) (Oceanobacillus iheyensis (strain DSM 14371 / CIP 107618 / JCM 11309 / KCTC 3954 / HTE831)).